The following is a 937-amino-acid chain: Periplasmic nitrate reductase (937 aa).

A signal peptide (tat-type signal) is located at residues 1 to 42 (MTSKIQGKKPTLSRRDFIKSAAAASAAASVGLSIPSVMSAEA). In terms of domain architecture, 4Fe-4S Mo/W bis-MGD-type spans 49 to 110 (WKWDKSVCRF…FCAKIMYGAD (62 aa)). Residues Cys56, Cys59, Cys63, and Cys96 each coordinate [4Fe-4S] cluster. Residues Lys98, Gln166, Asn191, Cys195, 228–235 (WGANMAEM), Met433, Gln437, Asn543, 568–569 (SE), Lys591, Asp618, and 827–836 (TGRVLEHWHS) each bind Mo-bis(molybdopterin guanine dinucleotide). Substrate is bound at residue Trp903. Residues Asn911 and Lys928 each coordinate Mo-bis(molybdopterin guanine dinucleotide).

Belongs to the prokaryotic molybdopterin-containing oxidoreductase family. NasA/NapA/NarB subfamily. As to quaternary structure, component of the periplasmic nitrate reductase NapAB complex composed of NapA and NapB. Requires [4Fe-4S] cluster as cofactor. The cofactor is Mo-bis(molybdopterin guanine dinucleotide). In terms of processing, predicted to be exported by the Tat system. The position of the signal peptide cleavage has not been experimentally proven.

It is found in the periplasm. The catalysed reaction is 2 Fe(II)-[cytochrome] + nitrate + 2 H(+) = 2 Fe(III)-[cytochrome] + nitrite + H2O. Catalytic subunit of the periplasmic nitrate reductase complex NapAB. Receives electrons from NapB and catalyzes the reduction of nitrate to nitrite. This Helicobacter hepaticus (strain ATCC 51449 / 3B1) protein is Periplasmic nitrate reductase.